We begin with the raw amino-acid sequence, 156 residues long: Small ribosomal subunit protein uS7 (156 aa).

It belongs to the universal ribosomal protein uS7 family. As to quaternary structure, part of the 30S ribosomal subunit. Contacts proteins S9 and S11.

In terms of biological role, one of the primary rRNA binding proteins, it binds directly to 16S rRNA where it nucleates assembly of the head domain of the 30S subunit. Is located at the subunit interface close to the decoding center, probably blocks exit of the E-site tRNA. The chain is Small ribosomal subunit protein uS7 from Pseudomonas fluorescens (strain ATCC BAA-477 / NRRL B-23932 / Pf-5).